The sequence spans 672 residues: DNA ligase (672 aa).

Residues 32 to 36, 82 to 83, and glutamate 113 each bind NAD(+); these read DEKYD and SL. Lysine 115 functions as the N6-AMP-lysine intermediate in the catalytic mechanism. Positions 136, 173, 290, and 314 each coordinate NAD(+). Zn(2+) contacts are provided by cysteine 408, cysteine 411, cysteine 427, and cysteine 433. One can recognise a BRCT domain in the interval 592 to 672; that stretch reads DNNNTLFRKK…EFLNIINVYL (81 aa).

This sequence belongs to the NAD-dependent DNA ligase family. LigA subfamily. It depends on Mg(2+) as a cofactor. Mn(2+) serves as cofactor.

The catalysed reaction is NAD(+) + (deoxyribonucleotide)n-3'-hydroxyl + 5'-phospho-(deoxyribonucleotide)m = (deoxyribonucleotide)n+m + AMP + beta-nicotinamide D-nucleotide.. Functionally, DNA ligase that catalyzes the formation of phosphodiester linkages between 5'-phosphoryl and 3'-hydroxyl groups in double-stranded DNA using NAD as a coenzyme and as the energy source for the reaction. It is essential for DNA replication and repair of damaged DNA. This is DNA ligase from Buchnera aphidicola subsp. Baizongia pistaciae (strain Bp).